The primary structure comprises 508 residues: Protein adenylyltransferase Fic (508 aa).

The chain crosses the membrane as a helical span at residues 48-70 (FYRFALFFIAGSFAAFSFHALTS). TPR repeat units follow at residues 132 to 165 (ALGA…APKH) and 166 to 200 (PEVL…CPSN). An Inhibitory (S/T)XXXE(G/N) motif motif is present at residues 257-262 (SVGIEG). ATP contacts are provided by residues E261 and 342 to 345 (VGGH). A Fido domain is found at 311–446 (ITIKDILELH…IRPFVRFIAD (136 aa)). H389 is an active-site residue. ATP-binding positions include 393-400 (DGNGRTSR), 425-426 (YY), and N433.

The protein belongs to the fic family. In terms of assembly, homodimer.

It is found in the membrane. It carries out the reaction L-tyrosyl-[protein] + ATP = O-(5'-adenylyl)-L-tyrosyl-[protein] + diphosphate. The enzyme catalyses L-threonyl-[protein] + ATP = 3-O-(5'-adenylyl)-L-threonyl-[protein] + diphosphate. It catalyses the reaction 3-O-(5'-adenylyl)-L-threonyl-[protein] + H2O = L-threonyl-[protein] + AMP + H(+). The side chain of Glu-261 determines which of the two opposing activities (AMPylase or de-AMPylase) will take place. In response to endoplasmic reticulum stress, mediates de-AMPylase activity. Adenylyltransferase activity is inhibited by the inhibitory helix present at the N-terminus: Glu-261 binds ATP and competes with ATP-binding at Arg-400, thereby preventing adenylyltransferase activity. In unstressed cells, disengagement of Glu-261 promotes adenylyltransferase activity. Activation dissociates ATP-binding from Glu-261, allowing ordered binding of the entire ATP moiety with the alpha-phosphate in an orientation that is productive for accepting an incoming target hydroxyl side chain. In terms of biological role, protein that can both mediate the addition of adenosine 5'-monophosphate (AMP) to specific residues of target proteins (AMPylation), and the removal of the same modification from target proteins (de-AMPylation), depending on the context. The side chain of Glu-261 determines which of the two opposing activities (AMPylase or de-AMPylase) will take place. Acts as a key regulator of the unfolded protein response (UPR) by mediating AMPylation or de-AMPylation of Hsc70-3/BiP. In unstressed cells, acts as an adenylyltransferase by mediating AMPylation of Hsc70-3/BiP at 'Thr-518', thereby inactivating it. In response to endoplasmic reticulum stress, acts as a phosphodiesterase by mediating removal of ATP (de-AMPylation) from Hsc70-3/BiP at 'Thr-518', leading to restore HSPA5/BiP activity. In Drosophila persimilis (Fruit fly), this protein is Protein adenylyltransferase Fic.